A 473-amino-acid polypeptide reads, in one-letter code: Ribulose bisphosphate carboxylase large chain 1 (473 aa).

Positions 116 and 166 each coordinate substrate. The Proton acceptor role is filled by K168. Residue K170 coordinates substrate. The Mg(2+) site is built by K194, D196, and E197. At K194 the chain carries N6-carboxylysine. The active-site Proton acceptor is the H287. 3 residues coordinate substrate: R288, H320, and S372.

The protein belongs to the RuBisCO large chain family. Type I subfamily. Heterohexadecamer of 8 large chains and 8 small chains. Requires Mg(2+) as cofactor.

The enzyme catalyses 2 (2R)-3-phosphoglycerate + 2 H(+) = D-ribulose 1,5-bisphosphate + CO2 + H2O. It carries out the reaction D-ribulose 1,5-bisphosphate + O2 = 2-phosphoglycolate + (2R)-3-phosphoglycerate + 2 H(+). Its function is as follows. RuBisCO catalyzes two reactions: the carboxylation of D-ribulose 1,5-bisphosphate, the primary event in carbon dioxide fixation, as well as the oxidative fragmentation of the pentose substrate. Both reactions occur simultaneously and in competition at the same active site. This Nitrobacter winogradskyi (strain ATCC 25391 / DSM 10237 / CIP 104748 / NCIMB 11846 / Nb-255) protein is Ribulose bisphosphate carboxylase large chain 1.